Reading from the N-terminus, the 287-residue chain is ATP synthase gamma chain (287 aa).

It belongs to the ATPase gamma chain family. In terms of assembly, F-type ATPases have 2 components, CF(1) - the catalytic core - and CF(0) - the membrane proton channel. CF(1) has five subunits: alpha(3), beta(3), gamma(1), delta(1), epsilon(1). CF(0) has three main subunits: a, b and c.

The protein localises to the cell inner membrane. Produces ATP from ADP in the presence of a proton gradient across the membrane. The gamma chain is believed to be important in regulating ATPase activity and the flow of protons through the CF(0) complex. This chain is ATP synthase gamma chain, found in Geobacter sp. (strain M21).